We begin with the raw amino-acid sequence, 366 residues long: Histidinol-phosphate aminotransferase 2 (366 aa).

Position 226 is an N6-(pyridoxal phosphate)lysine (Lys-226).

It belongs to the class-II pyridoxal-phosphate-dependent aminotransferase family. Histidinol-phosphate aminotransferase subfamily. Homodimer. It depends on pyridoxal 5'-phosphate as a cofactor.

It carries out the reaction L-histidinol phosphate + 2-oxoglutarate = 3-(imidazol-4-yl)-2-oxopropyl phosphate + L-glutamate. The protein operates within amino-acid biosynthesis; L-histidine biosynthesis; L-histidine from 5-phospho-alpha-D-ribose 1-diphosphate: step 7/9. This Haemophilus influenzae (strain 86-028NP) protein is Histidinol-phosphate aminotransferase 2.